We begin with the raw amino-acid sequence, 506 residues long: 2,3-bisphosphoglycerate-independent phosphoglycerate mutase (506 aa).

Residues Asp13 and Ser63 each coordinate Mn(2+). Ser63 functions as the Phosphoserine intermediate in the catalytic mechanism. Residues His124, 153-154 (RD), Arg183, Arg189, 255-258 (RADR), and Lys331 each bind substrate. Residues Asp397, His401, Asp438, His439, and His457 each contribute to the Mn(2+) site.

This sequence belongs to the BPG-independent phosphoglycerate mutase family. In terms of assembly, monomer. Requires Mn(2+) as cofactor.

The enzyme catalyses (2R)-2-phosphoglycerate = (2R)-3-phosphoglycerate. It functions in the pathway carbohydrate degradation; glycolysis; pyruvate from D-glyceraldehyde 3-phosphate: step 3/5. Its function is as follows. Catalyzes the interconversion of 2-phosphoglycerate and 3-phosphoglycerate. This Ruegeria sp. (strain TM1040) (Silicibacter sp.) protein is 2,3-bisphosphoglycerate-independent phosphoglycerate mutase.